A 1119-amino-acid polypeptide reads, in one-letter code: DISARM protein DrmA (1119 aa).

Residues 73 to 95 (PESGMEEDVEQQRNSELEQEAEE) are disordered. In terms of domain architecture, Helicase C-terminal spans 813-986 (ELSKYIDPYR…ATPYASRARD (174 aa)).

The protein belongs to the helicase family.

Its subcellular location is the cytoplasm. Component of antiviral defense system DISARM (defense island system associated with restriction-modification), composed of DrmE, DrmA, DrmB, DrmC and DrmMII. DISARM is probably a multi-gene restriction module, this subunit is probably a helicase. Expression of DISARM in B.subtilis (strain BEST7003) confers resistance to phages Nf, phi29, phi105, phi3T, SPO1, SPR and SPP1. Protection is over 10(7)-fold against phi3T, 10(4)-10(5)-fold against Nf, phi29, phi105 and SPR, 100-fold against SPO1 and 10-fold against SPP1. DISARM does not interfere with phage adsorption, but instead interferes with (phi3T) DNA replication early in its cycle, preventing replication, circularization and lysogeny and probably causes phage DNA degradation (DNA is degraded in SPP1-infected cells). The polypeptide is DISARM protein DrmA (Bacillus paralicheniformis (strain ATCC 9945a / NCIMB 11709 / CD-2)).